The sequence spans 396 residues: Growth-regulating factor 1 (396 aa).

In terms of domain architecture, QLQ spans Pro-18 to Arg-53. Short sequence motifs (bipartite nuclear localization signal) lie at residues Arg-86 to Arg-105 and Arg-123 to Lys-130. A WRC domain is found at Asp-90–Met-134. The segment at Cys-117–Pro-176 is disordered. The segment covering His-120–Arg-129 has biased composition (basic residues). The span at Ser-144–Pro-174 shows a compositional bias: low complexity.

It belongs to the GRF family. Highly expressed in the intercalary meristem of the internode and in the shoot apex. Detected in the leaf primordia and emerging leaves in the uppermost node. Preferentially localized in the epidermis and in the tissues surrounding vascular bundles of the intercalary meristem of the internode and in adventitious roots of the second highest node. Low expression in the coleoptile and in the youngest leaf.

Its subcellular location is the nucleus. Its function is as follows. Transcription activator that plays a regulatory role in gibberellin-induced stem elongation. The polypeptide is Growth-regulating factor 1 (GRF1) (Oryza sativa subsp. indica (Rice)).